A 621-amino-acid polypeptide reads, in one-letter code: DEAD-box ATP-dependent RNA helicase 39 (621 aa).

A Q motif motif is present at residues E112–C140. The 188-residue stretch at I143–L330 folds into the Helicase ATP-binding domain. S156–T163 is an ATP binding site. The short motif at D270 to D273 is the DEAD box element. One can recognise a Helicase C-terminal domain in the interval K355–R505. Positions E497 to S621 are disordered. Basic and acidic residues predominate over residues N503–P537. The segment covering K555 to E572 has biased composition (low complexity).

Belongs to the DEAD box helicase family.

The catalysed reaction is ATP + H2O = ADP + phosphate + H(+). The sequence is that of DEAD-box ATP-dependent RNA helicase 39 (RH39) from Arabidopsis thaliana (Mouse-ear cress).